A 505-amino-acid chain; its full sequence is Maturase K (505 aa).

It belongs to the intron maturase 2 family. MatK subfamily.

It localises to the plastid. Its subcellular location is the chloroplast. Its function is as follows. Usually encoded in the trnK tRNA gene intron. Probably assists in splicing its own and other chloroplast group II introns. In Micranthes integrifolia (Wholeleaf saxifrage), this protein is Maturase K.